Consider the following 232-residue polypeptide: UPF0758 protein EF_2926 (232 aa).

The MPN domain occupies Lys107–Phe229. Positions 178, 180, and 191 each coordinate Zn(2+). The JAMM motif signature appears at His178–Asp191.

Belongs to the UPF0758 family.

In Enterococcus faecalis (strain ATCC 700802 / V583), this protein is UPF0758 protein EF_2926.